Reading from the N-terminus, the 430-residue chain is Adenylosuccinate synthetase (430 aa).

GTP contacts are provided by residues 12–18 (GDEGKGK) and 40–42 (GHT). Asp-13 acts as the Proton acceptor in catalysis. Residues Asp-13 and Gly-40 each coordinate Mg(2+). Residues 13 to 16 (DEGK), 38 to 41 (NAGH), Thr-130, Arg-144, Gln-224, and Thr-239 contribute to the IMP site. His-41 serves as the catalytic Proton donor. A disordered region spans residues 277–297 (PFPTEQDNETGRKIGERGREF). The segment covering 285–296 (ETGRKIGERGRE) has biased composition (basic and acidic residues). 299–305 (TNTGRPR) contributes to the substrate binding site. Arg-303 provides a ligand contact to IMP. GTP-binding positions include Arg-305, 331–333 (KLD), and 413–415 (STS).

Belongs to the adenylosuccinate synthetase family. As to quaternary structure, homodimer. Mg(2+) serves as cofactor.

It localises to the cytoplasm. It catalyses the reaction IMP + L-aspartate + GTP = N(6)-(1,2-dicarboxyethyl)-AMP + GDP + phosphate + 2 H(+). It functions in the pathway purine metabolism; AMP biosynthesis via de novo pathway; AMP from IMP: step 1/2. Its function is as follows. Plays an important role in the de novo pathway of purine nucleotide biosynthesis. Catalyzes the first committed step in the biosynthesis of AMP from IMP. The sequence is that of Adenylosuccinate synthetase from Bradyrhizobium sp. (strain ORS 278).